Here is a 121-residue protein sequence, read N- to C-terminus: Large ribosomal subunit protein bL12 (121 aa).

Belongs to the bacterial ribosomal protein bL12 family. As to quaternary structure, homodimer. Part of the ribosomal stalk of the 50S ribosomal subunit. Forms a multimeric L10(L12)X complex, where L10 forms an elongated spine to which 2 to 4 L12 dimers bind in a sequential fashion. Binds GTP-bound translation factors.

Functionally, forms part of the ribosomal stalk which helps the ribosome interact with GTP-bound translation factors. Is thus essential for accurate translation. This chain is Large ribosomal subunit protein bL12, found in Proteus mirabilis (strain HI4320).